We begin with the raw amino-acid sequence, 77 residues long: Acyl carrier protein (77 aa).

A Carrier domain is found at 2–77 (ADALERVTKI…DAVNYINSKQ (76 aa)). Ser-37 carries the post-translational modification O-(pantetheine 4'-phosphoryl)serine.

This sequence belongs to the acyl carrier protein (ACP) family. Post-translationally, 4'-phosphopantetheine is transferred from CoA to a specific serine of apo-ACP by AcpS. This modification is essential for activity because fatty acids are bound in thioester linkage to the sulfhydryl of the prosthetic group.

It localises to the cytoplasm. The protein operates within lipid metabolism; fatty acid biosynthesis. In terms of biological role, carrier of the growing fatty acid chain in fatty acid biosynthesis. This Bacillus licheniformis (strain ATCC 14580 / DSM 13 / JCM 2505 / CCUG 7422 / NBRC 12200 / NCIMB 9375 / NCTC 10341 / NRRL NRS-1264 / Gibson 46) protein is Acyl carrier protein.